The chain runs to 411 residues: Methylthioribose-1-phosphate isomerase (411 aa).

The residue at position 2 (S2) is an N-acetylserine. The active-site Proton donor is the D280. S351 carries the phosphoserine modification.

The protein belongs to the eIF-2B alpha/beta/delta subunits family. MtnA subfamily. In terms of assembly, homodimer.

The protein localises to the cytoplasm. It is found in the nucleus. The catalysed reaction is 5-(methylsulfanyl)-alpha-D-ribose 1-phosphate = 5-(methylsulfanyl)-D-ribulose 1-phosphate. It functions in the pathway amino-acid biosynthesis; L-methionine biosynthesis via salvage pathway; L-methionine from S-methyl-5-thio-alpha-D-ribose 1-phosphate: step 1/6. Its function is as follows. Catalyzes the interconversion of methylthioribose-1-phosphate (MTR-1-P) into methylthioribulose-1-phosphate (MTRu-1-P). This Saccharomyces cerevisiae (strain JAY291) (Baker's yeast) protein is Methylthioribose-1-phosphate isomerase.